We begin with the raw amino-acid sequence, 607 residues long: Potassium transporter KimA (607 aa).

Residues 1-30 (MYHSIKRFLIGKPLKSQAAGEQKLTKLKAL) are Cytoplasmic-facing. The helical transmembrane segment at 31–49 (AMLSSDALSSVAYGTEQIL) threads the bilayer. Asp36 and Tyr43 together coordinate K(+). Residues 50–62 (IILATISAAAFWY) are Extracellular-facing. Residues 63-84 (SIPIAVGVLILLLALILSYRQI) traverse the membrane as a helical segment. Topologically, residues 85-105 (IYAYPQGGGAYIVSKENLGEK) are cytoplasmic. A helical membrane pass occupies residues 106–134 (PGLIAGGSLLVDYILTVAVSISAGTDAIT). 2 residues coordinate K(+): Asp117 and Ser125. At 135–142 (SAFPALHD) the chain is on the extracellular side. The chain crosses the membrane as a helical span at residues 143–162 (YHVPIAIFLVLVIMILNLRG). At 163–166 (LSES) the chain is on the cytoplasmic side. Residues 167–190 (ASILAYPVYLFVVALLVLIAVGLF) traverse the membrane as a helical segment. Residues 191–214 (KLMTGQIDQPAHHTSLGTPVAGIT) are Extracellular-facing. A helical membrane pass occupies residues 215-238 (LFLLLKAFSSGCSALTGVEAISNA). Residues 239-249 (IPAFKNPPARN) are Cytoplasmic-facing. A helical transmembrane segment spans residues 250–271 (AARTLAMMGILLAILFSGITVL). Topologically, residues 272 to 298 (AYGYGTAPKPDETVVSQIASETFGRNV) are extracellular. The helical transmembrane segment at 299–323 (FYYVIQGVTSLILVLAANTGFSAFP) threads the bilayer. The Cytoplasmic segment spans residues 324–347 (QLAFNLARDQYMPRMFTVRGDRLG). Residues 348-366 (FSNGIIFLGFASIVLIILF) traverse the membrane as a helical segment. The Extracellular segment spans residues 367 to 372 (GGQTEH). The chain crosses the membrane as a helical span at residues 373–393 (LIPLYAVGVFIPFTLSQTGMC). Residues 394–405 (MKWIKQKPKGWI) lie on the Cytoplasmic side of the membrane. The chain crosses the membrane as a helical span at residues 406–428 (GKMLINSCGALISFMVLSILFVT). The Extracellular portion of the chain corresponds to 429-431 (KFN). A helical transmembrane segment spans residues 432 to 447 (VVWPVLIFMPIVVLLF). The Cytoplasmic portion of the chain corresponds to 448-607 (FAIKNHYTAV…VATLPYHFKK (160 aa)).

The protein belongs to the amino acid-polyamine-organocation (APC) superfamily. Homodimer.

It is found in the cell membrane. It carries out the reaction K(+)(in) + H(+)(in) = K(+)(out) + H(+)(out). Its activity is regulated as follows. Potassium uptake increases at lower external pH and is abolished by the proton ionophore carbonyl cyanide m-chlorophenylhydrazone (CCCP). Binds cyclic di-AMP (c-di-AMP), which inhibits the potassium transport activity. High-affinity potassium transporter. Functions as a K(+)/H(+) symporter. The sequence is that of Potassium transporter KimA from Bacillus subtilis (strain 168).